The sequence spans 244 residues: Uridylate kinase (244 aa).

Residue 19-22 participates in ATP binding; the sequence is KVSG. Positions 27–32 are involved in allosteric activation by GTP; that stretch reads GERGFG. Gly61 serves as a coordination point for UMP. ATP is bound by residues Gly62 and Arg66. Residues Asp80 and 141–148 contribute to the UMP site; that span reads IGSPFFTT. ATP-binding residues include Thr168, Gln169, Tyr174, and Asp177.

The protein belongs to the UMP kinase family. Homohexamer.

The protein resides in the cytoplasm. The enzyme catalyses UMP + ATP = UDP + ADP. The protein operates within pyrimidine metabolism; CTP biosynthesis via de novo pathway; UDP from UMP (UMPK route): step 1/1. Allosterically activated by GTP. Inhibited by UTP. In terms of biological role, catalyzes the reversible phosphorylation of UMP to UDP. This Anaplasma phagocytophilum (strain HZ) protein is Uridylate kinase.